Reading from the N-terminus, the 348-residue chain is Phosphoribosylformylglycinamidine cyclo-ligase (348 aa).

The protein belongs to the AIR synthase family.

It is found in the cytoplasm. It carries out the reaction 2-formamido-N(1)-(5-O-phospho-beta-D-ribosyl)acetamidine + ATP = 5-amino-1-(5-phospho-beta-D-ribosyl)imidazole + ADP + phosphate + H(+). It participates in purine metabolism; IMP biosynthesis via de novo pathway; 5-amino-1-(5-phospho-D-ribosyl)imidazole from N(2)-formyl-N(1)-(5-phospho-D-ribosyl)glycinamide: step 2/2. The sequence is that of Phosphoribosylformylglycinamidine cyclo-ligase from Ruegeria sp. (strain TM1040) (Silicibacter sp.).